A 330-amino-acid chain; its full sequence is Polyprenyl transferase dpfgC (330 aa).

The N-linked (GlcNAc...) asparagine glycan is linked to asparagine 34. 7 helical membrane passes run 105–125 (ALCV…NDWI), 146–166 (VTTT…WGVL), 175–192 (VLKH…YPFG), 199–219 (KLMI…AIPG), 237–257 (CLPL…AYSY), 273–293 (NIAG…IILA), and 310–330 (NFIL…LTSA).

This sequence belongs to the UbiA prenyltransferase family. The cofactor is Mg(2+).

It localises to the membrane. The protein operates within secondary metabolite biosynthesis; terpenoid biosynthesis. Its function is as follows. Polyprenyl transferase; part of the gene cluster that mediates the biosynthesis of diterpenoid pyrones. The first step of the pathway is the synthesis of the alpha-pyrone moiety by the polyketide synthase dpfgA via condensation of one acetyl-CoA starter unit with 3 malonyl-CoA units and 2 methylations. The alpha-pyrone is then combined with geranylgeranyl pyrophosphate (GGPP) formed by the GGPP synthase dpfgD through the action of the prenyltransferase dpfgC to yield a linear alpha-pyrone diterpenoid. Subsequent steps in the diterpenoid pyrone biosynthetic pathway involve the decalin core formation, which is initiated by the epoxidation of the C10-C11 olefin by the FAD-dependent oxidoreductase dpfgE, and is followed by a cyclization cascade catalyzed by the terpene cyclase dpfgB. The short chain dehydrogenase/reductase dpfgG then oxidizes the 8S hydroxy group to a ketone and the short chain dehydrogenase/reductase dpfgH reduces the ketone to the 8R hydroxy group to yield higginsianin B. Higginsianin B is further methylated by the methyltransferase dpfgI to produce the intermediate named FDDP B. The cytochrome P450 monooxygenase dfgpJ then catalyzes a three-step oxidation at C-27 to generate a carboxylic acid as well as C-26 hydroxylation. Finally, methyltransferase dpfgK methylates the carboxylic acid generated by dpfgJ, yielding the final diterpenoid pyrones from the pathway which were named FDDP D and FDDP E. The protein is Polyprenyl transferase dpfgC of Gibberella zeae (strain ATCC MYA-4620 / CBS 123657 / FGSC 9075 / NRRL 31084 / PH-1) (Wheat head blight fungus).